The following is a 160-amino-acid chain: MAIEGVLNEGFVTTTADKLINWTRTGSLWPMTFGLACCAVEMMHAGAARYDMDRFGVIFRPSPRQSDVMIVAGTLCNKMAPALRKVYDQMAEPRWVISMGSCANGGGYYHYSYSVVRGCDRIVPVDIYVPGCPPTAEALIYGVIQLQNKIKRTNTIARKG.

Residues Cys-37, Cys-38, Cys-102, and Cys-132 each coordinate [4Fe-4S] cluster.

This sequence belongs to the complex I 20 kDa subunit family. As to quaternary structure, NDH-1 is composed of 14 different subunits. Subunits NuoB, C, D, E, F, and G constitute the peripheral sector of the complex. [4Fe-4S] cluster serves as cofactor.

Its subcellular location is the cell inner membrane. It carries out the reaction a quinone + NADH + 5 H(+)(in) = a quinol + NAD(+) + 4 H(+)(out). In terms of biological role, NDH-1 shuttles electrons from NADH, via FMN and iron-sulfur (Fe-S) centers, to quinones in the respiratory chain. Couples the redox reaction to proton translocation (for every two electrons transferred, four hydrogen ions are translocated across the cytoplasmic membrane), and thus conserves the redox energy in a proton gradient. The sequence is that of NADH-quinone oxidoreductase subunit B from Cupriavidus metallidurans (strain ATCC 43123 / DSM 2839 / NBRC 102507 / CH34) (Ralstonia metallidurans).